A 245-amino-acid polypeptide reads, in one-letter code: UPF0328 protein ECU09_2010 (245 aa).

It belongs to the UPF0328 family.

This chain is UPF0328 protein ECU09_2010, found in Encephalitozoon cuniculi (strain GB-M1) (Microsporidian parasite).